We begin with the raw amino-acid sequence, 99 residues long: MLIDFCCSYIAGTHGRERAPSFTGTFVSHVSGENNCRPRRSEITQPCASGTEKKHFAATEKPCTNSLEGSRKDFLSLPLGHSYLFLFCFWRMICSEPKL.

Residues 74-90 (FLSLPLGHSYLFLFCFW) form a helical membrane-spanning segment.

It is found in the membrane. This is an uncharacterized protein from Saccharomyces cerevisiae (strain ATCC 204508 / S288c) (Baker's yeast).